A 155-amino-acid polypeptide reads, in one-letter code: Myelin basic protein (155 aa).

Disordered regions lie at residues 1-70 and 109-155; these read MASA…GRQT and TDGQ…PARR. Ala2 is subject to N-acetylalanine. 2 stretches are compositionally biased toward basic and acidic residues: residues 37–49 and 123–134; these read GSRK…KEPA and KSKEAYRGRRDG.

It belongs to the myelin basic protein family.

The protein localises to the myelin membrane. In terms of biological role, this protein may function to maintain proper structure of myelin. The protein is Myelin basic protein (MBP) of Heterodontus francisci (Horn shark).